Consider the following 177-residue polypeptide: MGRRKSQAAAERNLEPIKISTDSIKKRPRRDSNEPPFKKFDDLEMFETYLKGESWDNDFDFLHARLDYYPPFIRNEIHDDPEKIKPTMNNKSKKFVRNLHHHVDKHLLKQINDMVGIEYKFKREEEKLPDGRLIWRYKDESDHGFEGLDRKWTVEVDVECSPNDPTVVVDMRSIPID.

The interval 1–37 is disordered; that stretch reads MGRRKSQAAAERNLEPIKISTDSIKKRPRRDSNEPPF.

It belongs to the RGI1 family.

It localises to the cell membrane. Involved in the control of energetic metabolism and significantly contribute to cell fitness, especially under respiratory growth conditions. This Komagataella phaffii (strain GS115 / ATCC 20864) (Yeast) protein is Respiratory growth induced protein 1 (RGI1).